The following is a 349-amino-acid chain: Decapping nuclease RAI1 (349 aa).

Glu157 lines the a divalent metal cation pocket. Glu205 lines the substrate pocket. Residues Asp207, Glu222, and Leu223 each contribute to the a divalent metal cation site. Substrate contacts are provided by Lys224 and Gln248.

Belongs to the DXO/Dom3Z family. In terms of assembly, interacts with RAT1; the interaction is direct, stabilizes RAT1 protein structure and stimulates its exoribonuclease activity. The interaction also stimulates RAI1 pyrophosphohydrolase activity, probably by recruiting it to mRNA substrates. It depends on a divalent metal cation as a cofactor.

Its subcellular location is the nucleus. It carries out the reaction a 5'-end NAD(+)-phospho-ribonucleoside in mRNA + H2O = a 5'-end phospho-ribonucleoside in mRNA + NAD(+) + H(+). The catalysed reaction is a 5'-end (N(7)-methyl 5'-triphosphoguanosine)-ribonucleoside-ribonucleotide in mRNA + H2O = a (N(7)-methyl 5'-triphosphoguanosine)-nucleoside + a 5'-end phospho-ribonucleoside in mRNA + H(+). The enzyme catalyses a 5'-end triphospho-ribonucleoside in mRNA + H2O = a 5'-end phospho-ribonucleoside in mRNA + diphosphate + H(+). Its function is as follows. Decapping enzyme for NAD-capped RNAs: specifically hydrolyzes the nicotinamide adenine dinucleotide (NAD) cap from a subset of RNAs by removing the entire NAD moiety from the 5'-end of an NAD-capped RNA. The NAD-cap is present at the 5'-end of some RNAs and snoRNAs. In contrast to the canonical 5'-end N7 methylguanosine (m7G) cap, the NAD cap promotes mRNA decay. Also acts as a non-canonical decapping enzyme that removes the entire cap structure of m7G capped or incompletely capped RNAs. Has decapping activity toward incomplete 5'-end m7G cap mRNAs such as unmethylated 5'-end-capped RNA (cap0), while it has no activity toward 2'-O-ribose methylated m7G cap (cap1). Also possesses RNA 5'-pyrophosphohydrolase activity by hydrolyzing the 5'-end triphosphate to release pyrophosphates. Stimulates exoribonuclease activity of Rat1, allowing it to degrade RNAs with stable secondary structure more effectively. This Yarrowia lipolytica (strain CLIB 122 / E 150) (Yeast) protein is Decapping nuclease RAI1 (RAI1).